The chain runs to 324 residues: HPr kinase/phosphorylase (324 aa).

Active-site residues include H146 and K167. Residue 161–168 (GDSGLGKS) coordinates ATP. S168 is a Mg(2+) binding site. The active-site Proton acceptor; for phosphorylation activity. Proton donor; for dephosphorylation activity is the D185. An important for the catalytic mechanism of both phosphorylation and dephosphorylation region spans residues 209–218 (LEVRGLGLLD). E210 serves as a coordination point for Mg(2+). The active site involves R250. The important for the catalytic mechanism of dephosphorylation stretch occupies residues 271–276 (QVAAGR).

It belongs to the HPrK/P family. As to quaternary structure, homohexamer. Requires Mg(2+) as cofactor.

The enzyme catalyses [HPr protein]-L-serine + ATP = [HPr protein]-O-phospho-L-serine + ADP + H(+). It catalyses the reaction [HPr protein]-O-phospho-L-serine + phosphate + H(+) = [HPr protein]-L-serine + diphosphate. Functionally, catalyzes the ATP- as well as the pyrophosphate-dependent phosphorylation of a specific serine residue in HPr, a phosphocarrier protein of the phosphoenolpyruvate-dependent sugar phosphotransferase system (PTS). HprK/P also catalyzes the pyrophosphate-producing, inorganic phosphate-dependent dephosphorylation (phosphorolysis) of seryl-phosphorylated HPr (P-Ser-HPr). The polypeptide is HPr kinase/phosphorylase (Ralstonia pickettii (strain 12J)).